We begin with the raw amino-acid sequence, 1085 residues long: Solute carrier family 12 member 4 (1085 aa).

Over Met1–Gly119 the chain is Cytoplasmic. Ser24, Ser47, Ser51, Ser81, and Ser88 each carry phosphoserine. A disordered region spans residues Ala32–Ser56. The discontinuously helical transmembrane segment at Thr120–Leu141 threads the bilayer. Positions 131 and 132 each coordinate K(+). At Thr142–Gly149 the chain is on the extracellular side. Residues Val150 to Ser172 form a helical membrane-spanning segment. Over Ala173–Glu196 the chain is Cytoplasmic. Residues Phe197 to Leu225 form a helical membrane-spanning segment. Tyr216 contributes to the K(+) binding site. Over Thr226–Leu248 the chain is Extracellular. 2 consecutive transmembrane segments (helical) span residues Asn249–Lys271 and Tyr272–Lys297. Over Ser298–Ser419 the chain is Extracellular. A disulfide bond links Cys308 and Cys323. Residues Asn312, Asn331, and Asn347 are each glycosylated (N-linked (GlcNAc...) asparagine). Cys343 and Cys353 are oxidised to a cystine. The chain crosses the membrane as a helical span at residues Phe420–Arg440. K(+) contacts are provided by Pro429 and Thr432. Residues Gly433, Ile434, and Met435 each coordinate chloride. The Cytoplasmic portion of the chain corresponds to Ser441–Ser450. A helical membrane pass occupies residues Ile451–Phe473. The Extracellular portion of the chain corresponds to Gly474–Pro504. The chain crosses the membrane as a helical span at residues Trp505–Gln531. Residues Ala532–Pro554 lie on the Cytoplasmic side of the membrane. 2 helical membrane-spanning segments follow: residues Thr555–Asp575 and Met576–Val598. Tyr589 contacts chloride. Residues Gln599–Lys612 are Cytoplasmic-facing. The next 2 membrane-spanning stretches (helical) occupy residues Tyr613–Trp635 and Tyr636–Tyr651. Residues Ile652–Ser1085 are Cytoplasmic-facing. Residues Ile665–Glu681 are scissor helix. Residues Leu697, Lys699, Lys707, Tyr708, and Val730 each coordinate ATP. Ser734 is modified (phosphoserine). Residues Gly794, Trp795, and Tyr797 each coordinate ATP. Residues Ser916 and Ser967 each carry the phosphoserine modification. Thr983 bears the Phosphothreonine mark. Residue Ser1050 is modified to Phosphoserine.

Belongs to the SLC12A transporter family. K/Cl co-transporter subfamily. In terms of assembly, homodimer; adopts a domain-swap conformation at the scissor helices connecting the transmembrane domain and C-terminal domain. Heterodimer with other K-Cl cotransporters. Post-translationally, N-glycosylated. Phosphorylated, phosphorylation may regulate transporter activity. As to expression, ubiquitous.

Its subcellular location is the cell membrane. It carries out the reaction K(+)(in) + chloride(in) = K(+)(out) + chloride(out). Inhibited by WNK3. Functionally, mediates electroneutral potassium-chloride cotransport when activated by cell swelling. May contribute to cell volume homeostasis in single cells. May be involved in the regulation of basolateral Cl(-) exit in NaCl absorbing epithelia. This chain is Solute carrier family 12 member 4 (Slc12a4), found in Rattus norvegicus (Rat).